A 375-amino-acid chain; its full sequence is Putative glutamate--cysteine ligase 2 (375 aa).

It belongs to the glutamate--cysteine ligase type 2 family. YbdK subfamily.

It carries out the reaction L-cysteine + L-glutamate + ATP = gamma-L-glutamyl-L-cysteine + ADP + phosphate + H(+). ATP-dependent carboxylate-amine ligase which exhibits weak glutamate--cysteine ligase activity. This chain is Putative glutamate--cysteine ligase 2, found in Azoarcus sp. (strain BH72).